A 327-amino-acid chain; its full sequence is tRNA dimethylallyltransferase (327 aa).

14 to 21 (GPTASGKT) lines the ATP pocket. 16–21 (TASGKT) contacts substrate. 2 interaction with substrate tRNA regions span residues 39 to 42 (DSAL) and 163 to 167 (QRIQR).

Belongs to the IPP transferase family. Monomer. Requires Mg(2+) as cofactor.

The enzyme catalyses adenosine(37) in tRNA + dimethylallyl diphosphate = N(6)-dimethylallyladenosine(37) in tRNA + diphosphate. Its function is as follows. Catalyzes the transfer of a dimethylallyl group onto the adenine at position 37 in tRNAs that read codons beginning with uridine, leading to the formation of N6-(dimethylallyl)adenosine (i(6)A). In Xanthomonas oryzae pv. oryzae (strain PXO99A), this protein is tRNA dimethylallyltransferase.